The chain runs to 1093 residues: Electroneutral sodium bicarbonate exchanger 1 (1093 aa).

2 disordered regions span residues 1–25 (MPAAGSNEPDGVLSYQRPDEEAVVD) and 55–95 (PLGR…HDTP). Residues 1 to 478 (MPAAGSNEPD…DYRDALSLQC (478 aa)) lie on the Extracellular side of the membrane. Residues 59–77 (QSHRHHRTHGQKHRRRGRG) are compositionally biased toward basic residues. Zn(2+) contacts are provided by Phe-167 and Leu-169. The short motif at 340–344 (LFILL) is the VTVLP; mediates dimerization element. Residues 479-499 (LASFLFLYCACMSPVITFGGL) traverse the membrane as a helical segment. The Cytoplasmic portion of the chain corresponds to 500–523 (LGEATEGRISAIESLFGASMTGIA). Residues 524-544 (YSLFAGQALTILGSTGPVLVF) traverse the membrane as a helical segment. Over 545-565 (EKILFKFCKDYALSYLSLRAC) the chain is Extracellular. The helical transmembrane segment at 566 to 586 (IGLWTAFLCIVLVATDASSLV) threads the bilayer. Over 587-595 (CYITRFTEE) the chain is Cytoplasmic. Residues 596–616 (AFASLICIIFIYEAIEKLIHL) form a helical membrane-spanning segment. Topologically, residues 617–687 (AETYPIHMHS…EFMGSACGHH (71 aa)) are extracellular. Disulfide bonds link Cys-636–Cys-684 and Cys-638–Cys-672. N-linked (GlcNAc) asparagine glycosylation occurs at Asn-646. Residues 688–708 (GPYTPDVLFWSCILFFTTFIL) traverse the membrane as a helical segment. Residues 709–731 (SSTLKTFKTSRYFPTRVRSMVSD) are Cytoplasmic-facing. Residues 732 to 752 (FAVFLTIFTMVIIDFLIGVPS) form a helical membrane-spanning segment. The Extracellular segment spans residues 753 to 778 (PKLQVPSVFKPTRDDRGWIINPIGPN). A helical membrane pass occupies residues 779 to 799 (PWWTVIAAIIPALLCTILIFM). Residues 800–824 (DQQITAVIINRKEHKLKKGCGYHLD) are Cytoplasmic-facing. Residues 825 to 845 (LLMVAIMLGVCSIMGLPWFVA) form a helical membrane-spanning segment. The Extracellular portion of the chain corresponds to 846-881 (ATVLSITHVNSLKLESECSAPGEQPKFLGIREQRVT). Residues 882–902 (GLMIFVLMGCSVFMTAILKFI) form a helical membrane-spanning segment. Topologically, residues 903–904 (PM) are cytoplasmic. A helical transmembrane segment spans residues 905–925 (PVLYGVFLYMGVSSLQGIQFF). At 926–962 (DRLKLFGMPAKHQPDFIYLRHVPLRKVHLFTLIQLTC) the chain is on the extracellular side. The chain crosses the membrane as a helical span at residues 963 to 983 (LVLLWVIKASPAAIVFPMMVL). Residues 984–1093 (ALVFVRKVMD…GNAKEKSLFN (110 aa)) are Cytoplasmic-facing. A coiled-coil region spans residues 1010–1036 (ESKKKKLDDAKKKAKEEEEAEKMLEIG).

It belongs to the anion exchanger (TC 2.A.31) family. In terms of assembly, homodimer. In terms of tissue distribution, expressed in the pyramidal cells of the hippocampus (at protein level). Highly expressed in all major regions of the brain, spinal column and in testis, and moderate levels in trachea, thyroid and medulla region of kidney. Low expression levels observed in pancreas and kidney cortex. As to expression, expressed in the brain. Expressed in the brain, heart and kidney.

It localises to the apical cell membrane. The protein localises to the basolateral cell membrane. It is found in the cytoplasmic vesicle. Its subcellular location is the secretory vesicle. The protein resides in the synaptic vesicle membrane. It localises to the cell membrane. The enzyme catalyses 2 hydrogencarbonate(out) + chloride(in) + Na(+)(out) = 2 hydrogencarbonate(in) + chloride(out) + Na(+)(in). Activity is inhibited by 4,4'-Di-isothiocyanatostilbene-2,2'-disulfonic acid (DIDS - an inhibitor of several anion channels and transporters). With respect to regulation, activity is inhibited by 4,4'-Di-isothiocyanatostilbene-2,2'-disulfonic acid (DIDS - an inhibitor of several anion channels and transporters). Zinc-binding negatively regulates its activity. In terms of biological role, mediates electroneutral sodium- and carbonate-dependent chloride-HCO3(-) exchange with a Na(+):HCO3(-) stoichiometry of 2:1. Plays a major role in pH regulation in neurons. Mediates sodium reabsorption in the renal cortical collecting ducts. The sequence is that of Electroneutral sodium bicarbonate exchanger 1 from Homo sapiens (Human).